The primary structure comprises 320 residues: 4-hydroxy-3-methylbut-2-enyl diphosphate reductase (320 aa).

Residue Cys12 coordinates [4Fe-4S] cluster. (2E)-4-hydroxy-3-methylbut-2-enyl diphosphate contacts are provided by His41 and His74. Residues His41 and His74 each coordinate dimethylallyl diphosphate. 2 residues coordinate isopentenyl diphosphate: His41 and His74. Cys96 is a [4Fe-4S] cluster binding site. (2E)-4-hydroxy-3-methylbut-2-enyl diphosphate is bound at residue His124. Residue His124 participates in dimethylallyl diphosphate binding. His124 is an isopentenyl diphosphate binding site. Glu126 functions as the Proton donor in the catalytic mechanism. Position 167 (Thr167) interacts with (2E)-4-hydroxy-3-methylbut-2-enyl diphosphate. A [4Fe-4S] cluster-binding site is contributed by Cys197. (2E)-4-hydroxy-3-methylbut-2-enyl diphosphate is bound by residues Ser225, Ser226, Asn227, and Ser269. Dimethylallyl diphosphate contacts are provided by Ser225, Ser226, Asn227, and Ser269. Ser225, Ser226, Asn227, and Ser269 together coordinate isopentenyl diphosphate.

The protein belongs to the IspH family. Requires [4Fe-4S] cluster as cofactor.

The catalysed reaction is isopentenyl diphosphate + 2 oxidized [2Fe-2S]-[ferredoxin] + H2O = (2E)-4-hydroxy-3-methylbut-2-enyl diphosphate + 2 reduced [2Fe-2S]-[ferredoxin] + 2 H(+). It carries out the reaction dimethylallyl diphosphate + 2 oxidized [2Fe-2S]-[ferredoxin] + H2O = (2E)-4-hydroxy-3-methylbut-2-enyl diphosphate + 2 reduced [2Fe-2S]-[ferredoxin] + 2 H(+). Its pathway is isoprenoid biosynthesis; dimethylallyl diphosphate biosynthesis; dimethylallyl diphosphate from (2E)-4-hydroxy-3-methylbutenyl diphosphate: step 1/1. It participates in isoprenoid biosynthesis; isopentenyl diphosphate biosynthesis via DXP pathway; isopentenyl diphosphate from 1-deoxy-D-xylulose 5-phosphate: step 6/6. Functionally, catalyzes the conversion of 1-hydroxy-2-methyl-2-(E)-butenyl 4-diphosphate (HMBPP) into a mixture of isopentenyl diphosphate (IPP) and dimethylallyl diphosphate (DMAPP). Acts in the terminal step of the DOXP/MEP pathway for isoprenoid precursor biosynthesis. In Francisella tularensis subsp. novicida (strain U112), this protein is 4-hydroxy-3-methylbut-2-enyl diphosphate reductase.